The sequence spans 182 residues: NADH-quinone oxidoreductase subunit I (182 aa).

2 consecutive 4Fe-4S ferredoxin-type domains span residues 52–82 (LTRD…LQKA) and 92–121 (EFFR…LTPD). [4Fe-4S] cluster-binding residues include cysteine 62, cysteine 65, cysteine 68, cysteine 72, cysteine 101, cysteine 104, cysteine 107, and cysteine 111.

Belongs to the complex I 23 kDa subunit family. In terms of assembly, NDH-1 is composed of 13 different subunits. Subunits NuoA, H, J, K, L, M, N constitute the membrane sector of the complex. It depends on [4Fe-4S] cluster as a cofactor.

Its subcellular location is the cell inner membrane. The catalysed reaction is a quinone + NADH + 5 H(+)(in) = a quinol + NAD(+) + 4 H(+)(out). In terms of biological role, NDH-1 shuttles electrons from NADH, via FMN and iron-sulfur (Fe-S) centers, to quinones in the respiratory chain. The immediate electron acceptor for the enzyme in this species is believed to be ubiquinone. Couples the redox reaction to proton translocation (for every two electrons transferred, four hydrogen ions are translocated across the cytoplasmic membrane), and thus conserves the redox energy in a proton gradient. This is NADH-quinone oxidoreductase subunit I from Pseudomonas aeruginosa (strain LESB58).